Consider the following 92-residue polypeptide: MPKLEMMLLVLLILPLSSFSAAGEQVVQGDRRSDGLARYLQRGGRDVQECQVVTPGSKWGRCCLNRVCGPMCCPASHCYCIYHRGKGHGCSC.

The first 24 residues, 1-24 (MPKLEMMLLVLLILPLSSFSAAGE), serve as a signal peptide directing secretion. The propeptide occupies 25 to 45 (QVVQGDRRSDGLARYLQRGGR). At glutamate 49 the chain carries 4-carboxyglutamate. The residue at position 55 (proline 55) is a 4-hydroxyproline. 4 disulfides stabilise this stretch: cysteine 63–cysteine 72, cysteine 68–cysteine 80, cysteine 73–cysteine 90, and cysteine 78–cysteine 92.

Belongs to the conotoxin D superfamily. In terms of assembly, hetero-, homo- or pseudo-homodimer (identical sequence, different post-translational modifications). One pseudo-homodimer of [carboxyGlu-49, hydroxyPro-55]Ml20.1 and [carboxyGlu-49, hydroxyPro-55, hydroxyPro-70]Ml20.1 may exist. As to expression, expressed by the venom duct.

The protein localises to the secreted. In terms of biological role, alpha-conotoxins act on postsynaptic membranes, they bind to the nicotinic acetylcholine receptors (nAChR) and thus inhibit them. Through its two C-terminal domains, this homodimeric protein would bind to two nAChR allosteric sites, located outside the nAChR C-loop of the principal binding face and at the adjacent binding interface in a clockwise direction. This toxin specifically blocks mammalian neuronal nAChR of the alpha-7/CHRNA7, alpha-3-beta-2/CHRNA3-CHRNB2 and alpha-4-beta-2/CHRNA4-CHRNB2 subtypes. In Conus miles (Soldier cone), this protein is Alpha-conotoxin-like Mi20.1.